The sequence spans 372 residues: Long-tail fiber protein gp35 (372 aa).

One can recognise a GG-type lectin domain in the interval 22–193 (NSVRYKISIA…VGATGFPRGT (172 aa)).

As to quaternary structure, the long-tail fibers are trimeric, with a stoichiometry of gp34/gp37/gp36/gp35 of 3:3:3:1.

The protein localises to the virion. Structural component of the distal-half of the long-tail fiber. The long-tail fiber of T4 is about 1600 Angstroms long with a kink in the middle that divides the fiber into proximal and distal halves. The latter hinge is probably composed of gp35 protein. This chain is Long-tail fiber protein gp35 (35), found in Enterobacteria phage T4 (Bacteriophage T4).